Consider the following 107-residue polypeptide: uncharacterized protein (107 aa).

The Cytoplasmic segment spans residues 1 to 4 (MSLV). The chain crosses the membrane as a helical span at residues 5–25 (IDIADTIVSLTALIGLIITLI). At 26-107 (KFHSQNKEDA…ELCRSSDRSK (82 aa)) the chain is on the extracellular side.

It localises to the host membrane. This is an uncharacterized protein from Acidianus sp. F28 (AFV-2).